Reading from the N-terminus, the 194-residue chain is Probable GTP-binding protein EngB (194 aa).

The 172-residue stretch at leucine 23–valine 194 folds into the EngB-type G domain. Residues glycine 31–serine 38, glycine 57–serine 61, aspartate 75–glycine 78, threonine 143–aspartate 146, and tyrosine 173–alanine 175 each bind GTP. Positions 38 and 59 each coordinate Mg(2+).

Belongs to the TRAFAC class TrmE-Era-EngA-EngB-Septin-like GTPase superfamily. EngB GTPase family. It depends on Mg(2+) as a cofactor.

Necessary for normal cell division and for the maintenance of normal septation. The protein is Probable GTP-binding protein EngB of Thermosipho africanus (strain TCF52B).